A 4244-amino-acid polypeptide reads, in one-letter code: Tenascin-X (4244 aa).

Residues 1-23 (MMPAQYALTSSLVLLVLLSTARA) form the signal peptide. Positions 27-57 (SSRSNVTLPAPRPPPQPGGHTVGAGVGSPSS) are disordered. Asn31 is a glycosylation site (N-linked (GlcNAc...) asparagine). Positions 156 to 168 (CSCEPGWGGPTCS) constitute an EGF-like 1; incomplete domain. A disordered region spans residues 169 to 189 (DPTDAEIPPSSPPSASGSCPD). EGF-like domains are found at residues 183–213 (ASGS…GPSC), 214–244 (GWPS…GPDC), 245–275 (SQRS…GDDC), 276–306 (GMRS…GEDC), 307–337 (GVRS…GEDC), 338–368 (GTRS…GEDC), 369–399 (STRT…GDDC), 400–430 (GVRS…GTDC), 431–461 (GSRA…GEDC), 462–492 (GVRS…GRDC), 493–523 (GTRA…GEDC), 524–554 (GSRR…GEDC), 555–585 (STRS…GEDC), 586–616 (GVRQ…SEDC), 617–647 (SIRT…GPTC), 648–679 (ATRM…EDCG), 684–714 (PASA…GPDC), and 715–746 (AIQT…EDCG). 54 disulfide bridges follow: Cys187/Cys197, Cys191/Cys202, Cys204/Cys213, Cys218/Cys228, Cys222/Cys233, Cys235/Cys244, Cys249/Cys259, Cys253/Cys264, Cys266/Cys275, Cys280/Cys290, Cys284/Cys295, Cys297/Cys306, Cys311/Cys321, Cys315/Cys326, Cys328/Cys337, Cys342/Cys352, Cys346/Cys357, Cys359/Cys368, Cys373/Cys383, Cys377/Cys388, Cys390/Cys399, Cys404/Cys414, Cys408/Cys419, Cys421/Cys430, Cys435/Cys445, Cys439/Cys450, Cys452/Cys461, Cys466/Cys476, Cys470/Cys481, Cys483/Cys492, Cys497/Cys507, Cys501/Cys512, Cys514/Cys523, Cys528/Cys538, Cys532/Cys543, Cys545/Cys554, Cys559/Cys569, Cys563/Cys574, Cys576/Cys585, Cys590/Cys600, Cys594/Cys605, Cys607/Cys616, Cys621/Cys631, Cys625/Cys636, Cys638/Cys647, Cys652/Cys662, Cys656/Cys667, Cys669/Cys678, Cys688/Cys698, Cys692/Cys703, Cys705/Cys714, Cys719/Cys729, Cys723/Cys734, and Cys736/Cys745. Residues 926-956 (TGSSPLGLLGTTDEPPPSGPSTTQGAQAPLL) form a disordered region. 10 Fibronectin type-III domains span residues 959 to 1051 (RPQE…IMDK), 1064 to 1153 (RLGE…PQSD), 1161 to 1249 (HLGN…APER), 1263 to 1352 (LLGE…PQED), 1374 to 1468 (LLGE…TPPA), 1476 to 1572 (RLGE…TEAS), 1574 to 1669 (PPLE…RGDA), 1674 to 1764 (PPRL…ARSA), 1778 to 1868 (LGEE…REET), and 1883 to 1971 (HLGE…VPEE). The segment at 1340 to 1372 (PESVVAKTAPQEDVDETPSPTELGTEAPESPEE) is disordered. The Cell attachment site signature appears at 1666 to 1668 (RGD). A disordered region spans residues 1752 to 1777 (PLTADGTTEARSAMDDTGTKRPPKPR). The segment at 1968-1990 (VPEEEKPSEPPTATPEPPIKPRL) is disordered. Over residues 1976-1987 (EPPTATPEPPIK) the composition is skewed to pro residues. Fibronectin type-III domains lie at 1989-2089 (RLGE…SMEA), 2097-2185 (LLGE…APEE), 2196-2296 (RLGQ…TEPP), 2305-2398 (RLEE…TPSP), and 2408-2502 (PPEE…PQED). The interval 2281-2304 (APGKDEEMAPASTEPPTPEPPIKP) is disordered. The disordered stretch occupies residues 2495–2542 (GVTAPQEDVDETPSPTEPGTEAPGPPEEPLLGELTVTGSSPDSLSLSW). Residues 2506 to 2516 (TPSPTEPGTEA) are compositionally biased toward low complexity. 15 consecutive Fibronectin type-III domains span residues 2519 to 2617 (PPEE…TTQA), 2625 to 2723 (PPIK…TPSP), 2733 to 2840 (PPEE…TTPE), 2841 to 2939 (PPNK…TPAP), 2949 to 3042 (PPEE…APKD), 3062 to 3153 (RLGE…TPSP), 3168 to 3260 (LLGE…TPLP), 3264 to 3355 (RLGE…TKPS), 3357 to 3446 (RLGE…PLEK), 3451 to 3544 (HLGE…TPAP), 3553 to 3647 (PPEE…LAPA), 3657 to 3754 (RLSQ…TLSP), 3758 to 3847 (SPRD…VPDG), 3848 to 3934 (PTQL…TGLE), and 3935 to 4025 (APRD…LRIP). Over residues 2530–2542 (VTGSSPDSLSLSW) the composition is skewed to polar residues. Disordered regions lie at residues 2824-2847 (PEDE…KPRL) and 2933-2969 (EEET…DSLS). The span at 2937–2946 (PAPTEPSTEA) shows a compositional bias: low complexity. Residues 2960-2969 (VTGSSPDSLS) show a composition bias toward polar residues. Disordered regions lie at residues 3536–3559 (APEE…EPRL) and 3636–3662 (LSAE…SQLS). Asn3855, Asn3908, and Asn3920 each carry an N-linked (GlcNAc...) asparagine glycan. A Fibrinogen C-terminal domain is found at 4021 to 4236 (GLRIPFPRDC…FTEMKLRPRN (216 aa)). Residues Cys4030 and Cys4060 are joined by a disulfide bond. A glycan (N-linked (GlcNAc...) asparagine) is linked at Asn4095. A disulfide bridge links Cys4182 with Cys4195.

The protein belongs to the tenascin family. In terms of assembly, homotrimer. Interacts with type I, III and V collagens and tropoelastin via its 29th fibronectin type-III domain. Highly expressed in fetal adrenal, in fetal testis, fetal smooth, striated and cardiac muscle. Isoform XB-short is only expressed in the adrenal gland.

It localises to the secreted. Its subcellular location is the extracellular space. The protein localises to the extracellular matrix. Appears to mediate interactions between cells and the extracellular matrix. Substrate-adhesion molecule that appears to inhibit cell migration. Accelerates collagen fibril formation. May play a role in supporting the growth of epithelial tumors. This is Tenascin-X from Homo sapiens (Human).